Consider the following 217-residue polypeptide: Ribosomal RNA small subunit methyltransferase G (217 aa).

S-adenosyl-L-methionine contacts are provided by residues Gly79, Leu84, 102–104 (DST), 130–131 (VE), and Arg144.

Belongs to the methyltransferase superfamily. RNA methyltransferase RsmG family.

The protein resides in the cytoplasm. In terms of biological role, specifically methylates the N7 position of a guanine in 16S rRNA. The sequence is that of Ribosomal RNA small subunit methyltransferase G from Chlorobaculum tepidum (strain ATCC 49652 / DSM 12025 / NBRC 103806 / TLS) (Chlorobium tepidum).